Reading from the N-terminus, the 402-residue chain is Putative cytochrome P450 123 (402 aa).

Cys-350 contacts heme.

Belongs to the cytochrome P450 family. The cofactor is heme.

This Mycobacterium bovis (strain ATCC BAA-935 / AF2122/97) protein is Putative cytochrome P450 123 (cyp123).